The sequence spans 361 residues: Ribosomal RNA large subunit methyltransferase M (361 aa).

S-adenosyl-L-methionine is bound by residues Ser187, 220–223 (CPGG), Asp239, Asp259, and Asp276. Lys305 acts as the Proton acceptor in catalysis.

It belongs to the class I-like SAM-binding methyltransferase superfamily. RNA methyltransferase RlmE family. RlmM subfamily. As to quaternary structure, monomer.

Its subcellular location is the cytoplasm. It carries out the reaction cytidine(2498) in 23S rRNA + S-adenosyl-L-methionine = 2'-O-methylcytidine(2498) in 23S rRNA + S-adenosyl-L-homocysteine + H(+). In terms of biological role, catalyzes the 2'-O-methylation at nucleotide C2498 in 23S rRNA. The protein is Ribosomal RNA large subunit methyltransferase M of Shewanella sp. (strain ANA-3).